The chain runs to 271 residues: Bifunctional protein FolD (271 aa).

NADP(+) contacts are provided by residues 154-156, S181, and I222; that span reads GRS.

Belongs to the tetrahydrofolate dehydrogenase/cyclohydrolase family. In terms of assembly, homodimer.

The enzyme catalyses (6R)-5,10-methylene-5,6,7,8-tetrahydrofolate + NADP(+) = (6R)-5,10-methenyltetrahydrofolate + NADPH. The catalysed reaction is (6R)-5,10-methenyltetrahydrofolate + H2O = (6R)-10-formyltetrahydrofolate + H(+). It participates in one-carbon metabolism; tetrahydrofolate interconversion. In terms of biological role, catalyzes the oxidation of 5,10-methylenetetrahydrofolate to 5,10-methenyltetrahydrofolate and then the hydrolysis of 5,10-methenyltetrahydrofolate to 10-formyltetrahydrofolate. The sequence is that of Bifunctional protein FolD from Thermotoga petrophila (strain ATCC BAA-488 / DSM 13995 / JCM 10881 / RKU-1).